Consider the following 388-residue polypeptide: Succinate--CoA ligase [ADP-forming] subunit beta (388 aa).

The region spanning 9 to 244 is the ATP-grasp domain; that stretch reads KDLLVSYDIA…PSQENVRDVL (236 aa). Residues lysine 46, 53–55, valine 102, and glutamate 107 each bind ATP; that span reads GRG. Positions 199 and 213 each coordinate Mg(2+). Substrate is bound by residues asparagine 264 and 321 to 323; that span reads GIM.

This sequence belongs to the succinate/malate CoA ligase beta subunit family. Heterotetramer of two alpha and two beta subunits. Mg(2+) is required as a cofactor.

The enzyme catalyses succinate + ATP + CoA = succinyl-CoA + ADP + phosphate. The catalysed reaction is GTP + succinate + CoA = succinyl-CoA + GDP + phosphate. It functions in the pathway carbohydrate metabolism; tricarboxylic acid cycle; succinate from succinyl-CoA (ligase route): step 1/1. Functionally, succinyl-CoA synthetase functions in the citric acid cycle (TCA), coupling the hydrolysis of succinyl-CoA to the synthesis of either ATP or GTP and thus represents the only step of substrate-level phosphorylation in the TCA. The beta subunit provides nucleotide specificity of the enzyme and binds the substrate succinate, while the binding sites for coenzyme A and phosphate are found in the alpha subunit. The sequence is that of Succinate--CoA ligase [ADP-forming] subunit beta from Chlamydia caviae (strain ATCC VR-813 / DSM 19441 / 03DC25 / GPIC) (Chlamydophila caviae).